Here is a 156-residue protein sequence, read N- to C-terminus: Ribosomal RNA large subunit methyltransferase H (156 aa).

Residues Leu-73, Gly-104, and 123–128 each bind S-adenosyl-L-methionine; that span reads LGALTL.

The protein belongs to the RNA methyltransferase RlmH family. Homodimer.

It is found in the cytoplasm. The enzyme catalyses pseudouridine(1915) in 23S rRNA + S-adenosyl-L-methionine = N(3)-methylpseudouridine(1915) in 23S rRNA + S-adenosyl-L-homocysteine + H(+). Its function is as follows. Specifically methylates the pseudouridine at position 1915 (m3Psi1915) in 23S rRNA. The protein is Ribosomal RNA large subunit methyltransferase H of Dichelobacter nodosus (strain VCS1703A).